The sequence spans 240 residues: Pathogenesis-related thaumatin-like protein 3.5 (240 aa).

An N-terminal signal peptide occupies residues 1–20 (MASLRLATLAMMVLFGSCRA). Disulfide bonds link Cys31/Cys237, Cys79/Cys89, Cys94/Cys100, Cys145/Cys227, Cys150/Cys210, Cys158/Cys173, Cys177/Cys186, and Cys187/Cys197.

This sequence belongs to the thaumatin family. Strongly expressed in pollen grains. Also present at weak levels in seedling roots, in sapling stems and in developing male strobili.

May be involved in disease resistance. The protein is Pathogenesis-related thaumatin-like protein 3.5 of Cryptomeria japonica (Japanese cedar).